Reading from the N-terminus, the 54-residue chain is Large ribosomal subunit protein bL33 (54 aa).

It belongs to the bacterial ribosomal protein bL33 family.

In Frankia alni (strain DSM 45986 / CECT 9034 / ACN14a), this protein is Large ribosomal subunit protein bL33.